The following is a 445-amino-acid chain: 3-phosphoshikimate 1-carboxyvinyltransferase (445 aa).

The 3-phosphoshikimate site is built by Lys28, Ser29, and Arg33. Lys28 contacts phosphoenolpyruvate. 2 residues coordinate phosphoenolpyruvate: Gly101 and Arg129. 3-phosphoshikimate contacts are provided by Ser175, Gln177, Asp328, and Lys355. Residue Gln177 coordinates phosphoenolpyruvate. The active-site Proton acceptor is Asp328. Residues Arg359 and Arg402 each contribute to the phosphoenolpyruvate site.

This sequence belongs to the EPSP synthase family. Monomer.

The protein resides in the cytoplasm. It carries out the reaction 3-phosphoshikimate + phosphoenolpyruvate = 5-O-(1-carboxyvinyl)-3-phosphoshikimate + phosphate. The protein operates within metabolic intermediate biosynthesis; chorismate biosynthesis; chorismate from D-erythrose 4-phosphate and phosphoenolpyruvate: step 6/7. Functionally, catalyzes the transfer of the enolpyruvyl moiety of phosphoenolpyruvate (PEP) to the 5-hydroxyl of shikimate-3-phosphate (S3P) to produce enolpyruvyl shikimate-3-phosphate and inorganic phosphate. The sequence is that of 3-phosphoshikimate 1-carboxyvinyltransferase from Bradyrhizobium sp. (strain BTAi1 / ATCC BAA-1182).